The following is a 407-amino-acid chain: S-adenosylmethionine synthase (407 aa).

H21 is a binding site for ATP. Position 23 (D23) interacts with Mg(2+). Position 49 (E49) interacts with K(+). Residues E62 and Q105 each coordinate L-methionine. Residues 105 to 115 are flexible loop; it reads QSQEIGAGVDA. ATP-binding positions include 179–181, D259, 265–266, A282, and K286; these read DGK and RK. Residue D259 coordinates L-methionine. K290 contacts L-methionine.

It belongs to the AdoMet synthase family. In terms of assembly, homotetramer; dimer of dimers. The cofactor is Mg(2+). K(+) is required as a cofactor.

It localises to the cytoplasm. It carries out the reaction L-methionine + ATP + H2O = S-adenosyl-L-methionine + phosphate + diphosphate. It participates in amino-acid biosynthesis; S-adenosyl-L-methionine biosynthesis; S-adenosyl-L-methionine from L-methionine: step 1/1. Catalyzes the formation of S-adenosylmethionine (AdoMet) from methionine and ATP. The overall synthetic reaction is composed of two sequential steps, AdoMet formation and the subsequent tripolyphosphate hydrolysis which occurs prior to release of AdoMet from the enzyme. This chain is S-adenosylmethionine synthase, found in Corynebacterium aurimucosum (strain ATCC 700975 / DSM 44827 / CIP 107346 / CN-1) (Corynebacterium nigricans).